A 777-amino-acid polypeptide reads, in one-letter code: Semaphorin-4F (777 aa).

The N-terminal stretch at 1–40 (MLARAERPRPGPRPPPVSLFPPPSSLLLLLLAMLSAPVCG) is a signal peptide. Residues 41–667 (RVPRSVPRTS…PANRAHTVVG (627 aa)) lie on the Extracellular side of the membrane. Residues 48–516 (RTSLPISEAD…SHTEVTQVNT (469 aa)) form the Sema domain. Asparagine 70 is a glycosylation site (N-linked (GlcNAc...) asparagine). A disulfide bond links cysteine 118 and cysteine 128. N-linked (GlcNAc...) asparagine glycosylation occurs at asparagine 139. Cystine bridges form between cysteine 146-cysteine 155, cysteine 279-cysteine 390, and cysteine 303-cysteine 349. Asparagine 515 is a glycosylation site (N-linked (GlcNAc...) asparagine). In terms of domain architecture, PSI spans 518-569 (NCGRLQSCSECILAQDPVCAWSFRLDACVAHAGEHRGMVQDIESADVSSLCP). Disulfide bonds link cysteine 519–cysteine 536, cysteine 528–cysteine 545, and cysteine 593–cysteine 634. The Ig-like C2-type domain occupies 586-641 (VGHVVLPCSPSSAWASCVWHQPSGVTSLTPRRDGLEVVVTPGAMGAYACECQEGGA). Residues 668–688 (AGLVGFFLGVLAASLTLLLIG) form a helical membrane-spanning segment. Over 689–777 (RRQQRRRQRE…PLATCDETSI (89 aa)) the chain is Cytoplasmic. Residues 703–742 (DKVGLDLGAPPSGTTSYSQDPPSPSPEDERLPLALGKRGS) form a disordered region. Residues serine 725 and serine 727 each carry the phosphoserine modification. The PDZ-binding motif lies at 775–777 (TSI).

Belongs to the semaphorin family. As to quaternary structure, interacts (via PDZ-binding motif) with DLG4/SAP90 (via PDZ domain 2); this interaction may promote translocation of DLG4/SAP90 to the membrane. As to expression, expressed throughout the adult brain, where it shows particularly strong expression in the hippocampus, corpus callosum, granular layer and deep nuclei of the cerebellum, and the mitral layer of the olfactory bulb (at protein level). At the cellular level, detected in neuronal precursors, postmitotic neurons, pyramidal neurons, and glial cells including mature oligodendocytes and oligodendroglial precursor cells (at protein level).

The protein localises to the cell membrane. The protein resides in the postsynaptic density. It is found in the perikaryon. It localises to the cell projection. Its subcellular location is the dendrite. In terms of biological role, probable cell surface receptor that regulates oligodendroglial precursor cell migration. Might also regulate differentiation of oligodendroglial precursor cells. Has growth cone collapse activity against retinal ganglion-cell axons. The polypeptide is Semaphorin-4F (Sema4f) (Mus musculus (Mouse)).